The following is a 406-amino-acid chain: Argininosuccinate synthase (406 aa).

9 to 17 contributes to the ATP binding site; the sequence is AYSGGLDTS. Residue tyrosine 86 participates in L-citrulline binding. Glycine 116 lines the ATP pocket. Positions 118, 122, and 123 each coordinate L-aspartate. Asparagine 122 provides a ligand contact to L-citrulline. Residues arginine 126, serine 174, serine 183, glutamate 259, and tyrosine 271 each coordinate L-citrulline.

It belongs to the argininosuccinate synthase family. Type 1 subfamily. Homotetramer.

Its subcellular location is the cytoplasm. The catalysed reaction is L-citrulline + L-aspartate + ATP = 2-(N(omega)-L-arginino)succinate + AMP + diphosphate + H(+). It participates in amino-acid biosynthesis; L-arginine biosynthesis; L-arginine from L-ornithine and carbamoyl phosphate: step 2/3. This is Argininosuccinate synthase from Geobacillus kaustophilus (strain HTA426).